A 512-amino-acid chain; its full sequence is Glutathione-binding protein GsiB (512 aa).

The N-terminal stretch at 1 to 26 is a signal peptide; sequence MTQFITHKWLAALGLASSIAAFPALA.

This sequence belongs to the bacterial solute-binding protein 5 family. The complex is composed of two ATP-binding proteins (GsiA), two transmembrane proteins (GsiC and GsiD) and a solute-binding protein (GsiB).

It localises to the periplasm. In terms of biological role, part of the ABC transporter complex GsiABCD involved in glutathione import. Binds glutathione. The chain is Glutathione-binding protein GsiB from Salmonella typhimurium (strain LT2 / SGSC1412 / ATCC 700720).